We begin with the raw amino-acid sequence, 181 residues long: Isopentenyl-diphosphate Delta-isomerase (181 aa).

Positions 25 and 32 each coordinate Mn(2+). One can recognise a Nudix hydrolase domain in the interval 30–164; it reads PLHLAFSCWL…PWAFSPWMVM (135 aa). Cys-67 is an active-site residue. A Mg(2+)-binding site is contributed by Cys-67. A Mn(2+)-binding site is contributed by His-69. Glu-87 contacts Mg(2+). Mn(2+) contacts are provided by Glu-114 and Glu-116. Glu-116 is an active-site residue.

The protein belongs to the IPP isomerase type 1 family. As to quaternary structure, homodimer. It depends on Mg(2+) as a cofactor. The cofactor is Mn(2+).

It localises to the cytoplasm. The catalysed reaction is isopentenyl diphosphate = dimethylallyl diphosphate. The protein operates within isoprenoid biosynthesis; dimethylallyl diphosphate biosynthesis; dimethylallyl diphosphate from isopentenyl diphosphate: step 1/1. Catalyzes the 1,3-allylic rearrangement of the homoallylic substrate isopentenyl (IPP) to its highly electrophilic allylic isomer, dimethylallyl diphosphate (DMAPP). The chain is Isopentenyl-diphosphate Delta-isomerase from Salmonella choleraesuis (strain SC-B67).